Consider the following 427-residue polypeptide: Delta(14)-sterol reductase (427 aa).

Residues 1-25 are Cytoplasmic-facing; it reads MSEQESRDNAAVDAVRQKYGFGFSW. The helical transmembrane segment at 26 to 46 threads the bilayer; that stretch reads LVLMIALPPLVYYLWICVTYY. The Periplasmic segment spans residues 47 to 70; the sequence is QGELVFTSDAAAWRRFWSHVAPPT. The helical transmembrane segment at 71–91 threads the bilayer; that stretch reads WHAAGLYAAWFLGQAALQVWA. Topologically, residues 92-110 are cytoplasmic; sequence PGPTVQGMKLPDGSRLDYR. A helical transmembrane segment spans residues 111 to 131; sequence MNGIFSFLFTLAVVFGLVTMG. Residues 132 to 141 lie on the Periplasmic side of the membrane; sequence WLDATVLYDQ. Residues 142–162 form a helical membrane-spanning segment; sequence LGPLLTVVNIFTFVFAGFLYF. Residues 163-197 are Cytoplasmic-facing; it reads WGLNGKQWERPTGRPFYDYFMGTALNPRIGSLDLK. Residues 198 to 218 traverse the membrane as a helical segment; it reads LFCEARPGMIFWLLMNLSMAA. Topologically, residues 219–226 are periplasmic; sequence KQYELHGT. Residues 227–247 form a helical membrane-spanning segment; that stretch reads VTVPMLLVVGFQSFYLIDYFI. Residues 248-262 lie on the Cytoplasmic side of the membrane; the sequence is HEEAVLTTWDIKHEK. The helical transmembrane segment at 263–283 threads the bilayer; it reads FGWMLCWGDLVWLPFTYTLQA. Topologically, residues 284–291 are periplasmic; the sequence is QYLVHHTH. The chain crosses the membrane as a helical span at residues 292 to 312; it reads DLPVWGIIAIVALNLAGYAIF. Over 313 to 356 the chain is Cytoplasmic; it reads RGANIQKHHFRRDPNRIVWGKPAKYIKTKQGSLLLTSGWWGIAR. Residues Lys319, Arg323, Leu347, Trp352, and 359 to 360 contribute to the NADP(+) site; that span reads NY. A helical membrane pass occupies residues 357–377; it reads HMNYFGDLMIALSWCLPAAFG. A topological domain (periplasmic) is located at residue Ser378. The chain crosses the membrane as a helical span at residues 379–399; sequence PIPYFHIVYFTILLLHREKRD. Residues Asp399, 403-407, and Tyr414 contribute to the NADP(+) site; that span reads CLAKY. At 400–427 the chain is on the cytoplasmic side; that stretch reads DAMCLAKYGEDWLQYRKKVPWRIVPKIY.

Belongs to the ERG4/ERG24 family.

It localises to the cell inner membrane. The catalysed reaction is 4,4-dimethyl-5alpha-cholesta-8,24-dien-3beta-ol + NADP(+) = 4,4-dimethyl-5alpha-cholesta-8,14,24-trien-3beta-ol + NADPH + H(+). Its pathway is steroid biosynthesis; zymosterol biosynthesis; zymosterol from lanosterol. In terms of biological role, reduces the C14=C15 double bond of 4,4-dimethyl-cholesta-8,14,24-trienol to produce 4,4-dimethyl-cholesta-8,24-dienol. Complements the deletion of the Delta(14)-sterol reductase gene ERG24 in yeast. The sequence is that of Delta(14)-sterol reductase from Methylotuvimicrobium alcaliphilum (strain DSM 19304 / NCIMB 14124 / VKM B-2133 / 20Z) (Methylomicrobium alcaliphilum).